The primary structure comprises 320 residues: o-succinylbenzoate synthase (320 aa).

The active-site Proton donor is K133. Residues D161, E190, and D213 each coordinate Mg(2+). The Proton acceptor role is filled by K235.

Belongs to the mandelate racemase/muconate lactonizing enzyme family. MenC type 1 subfamily. A divalent metal cation is required as a cofactor.

It carries out the reaction (1R,6R)-6-hydroxy-2-succinyl-cyclohexa-2,4-diene-1-carboxylate = 2-succinylbenzoate + H2O. The protein operates within quinol/quinone metabolism; 1,4-dihydroxy-2-naphthoate biosynthesis; 1,4-dihydroxy-2-naphthoate from chorismate: step 4/7. Its pathway is quinol/quinone metabolism; menaquinone biosynthesis. Converts 2-succinyl-6-hydroxy-2,4-cyclohexadiene-1-carboxylate (SHCHC) to 2-succinylbenzoate (OSB). This is o-succinylbenzoate synthase from Salmonella paratyphi A (strain ATCC 9150 / SARB42).